The primary structure comprises 355 residues: MAGFNIKHWFADGAFRTIIRNSAWLGSSNVVSALLGLLALSCAGKGMTPAMFGVLVIVQSYAKSISDFIKFQTWQLVVQYGTPALTNNNPQQFRNVVSFSFSLDIVSGAVAIVGGIALLPFLSHSLGLDDQSFWLAALYCTLIPSMASSTPTGILRAVDRFDLIAVQQATKPFLRAAGSVVAWYFDFGFAGFVIAWYVSNLVGGTMYWWFAARELRRRNIHNAFKLNLFESARYIKGAWSFVWSTNIAHSIWSARNSCSTVLVGIVLGPAAAGLFKIAMTFFDAAGTPAGLLGKSFYPEVMRLDPRTTRPWLLGVKSGLLAGGIGILVALAVLIVGKPLISLVFGVKYLEAYDLI.

The Periplasmic portion of the chain corresponds to 1–37 (MAGFNIKHWFADGAFRTIIRNSAWLGSSNVVSALLGL). A helical transmembrane segment spans residues 38-58 (LALSCAGKGMTPAMFGVLVIV). Residues 59 to 100 (QSYAKSISDFIKFQTWQLVVQYGTPALTNNNPQQFRNVVSFS) lie on the Cytoplasmic side of the membrane. The chain crosses the membrane as a helical span at residues 101-121 (FSLDIVSGAVAIVGGIALLPF). The Periplasmic portion of the chain corresponds to 122-134 (LSHSLGLDDQSFW). Residues 135 to 155 (LAALYCTLIPSMASSTPTGIL) form a helical membrane-spanning segment. Residues 156 to 177 (RAVDRFDLIAVQQATKPFLRAA) lie on the Cytoplasmic side of the membrane. Residues 178–198 (GSVVAWYFDFGFAGFVIAWYV) traverse the membrane as a helical segment. At 199–261 (SNLVGGTMYW…WSARNSCSTV (63 aa)) the chain is on the periplasmic side. A helical membrane pass occupies residues 262-282 (LVGIVLGPAAAGLFKIAMTFF). Residues 283 to 323 (DAAGTPAGLLGKSFYPEVMRLDPRTTRPWLLGVKSGLLAGG) are Cytoplasmic-facing. The helical transmembrane segment at 324–344 (IGILVALAVLIVGKPLISLVF) threads the bilayer. Residues 345–355 (GVKYLEAYDLI) are Periplasmic-facing.

It localises to the cell inner membrane. This Escherichia coli (strain K12) protein is Inner membrane protein YghQ (yghQ).